Reading from the N-terminus, the 272-residue chain is Plastid division protein PDV1 (272 aa).

Residues 1 to 206 (MGEMEIEEIE…KRALGFNHVK (206 aa)) lie on the Cytoplasmic side of the membrane. Residues 40–61 (KPSNRSEKRKNPHGNSGEDKRP) are disordered. Positions 78-102 (IQEAKSLNAIRTALENLEDQLEFFH) form a coiled coil. A helical membrane pass occupies residues 207 to 225 (GVLGNAAIFAISVVAMLHL). Residues 226-272 (HQVATSEHHLQKKEDRFYRSQQRKTYGRDKSSADRSLDHLDVMMARG) lie on the Chloroplast intermembrane side of the membrane.

As to quaternary structure, interacts (via C-terminus) with CDP1/PARC6 (via C-terminus). Interacts with ARC5/DRP5B. In terms of tissue distribution, expressed in young developing leaves, root tips, shoot apices, and flower buds (sepals, petals, stamens, and pistils), but not in developed tissues.

It localises to the plastid. Its subcellular location is the chloroplast outer membrane. Component of the plastid division machinery. Required to mediate the dissociation of ARC5/DRP5B from plastid outer envelope membranes (OEMs) at the midplastid constriction site in the cytoplasm, thus triggering ARC5/DRP5B ring turnover at the chloroplast division site. Binding to phosphatidylinositol 4-phosphate (PI4P) modulates negatively chloroplast division. This is Plastid division protein PDV1 from Arabidopsis thaliana (Mouse-ear cress).